A 310-amino-acid chain; its full sequence is Carbamate kinase-like protein YqeA (310 aa).

It belongs to the carbamate kinase family.

The sequence is that of Carbamate kinase-like protein YqeA (yqeA) from Escherichia coli (strain K12).